The chain runs to 250 residues: 5'-nucleotidase SurE (250 aa).

D8, D9, S39, and N91 together coordinate a divalent metal cation.

This sequence belongs to the SurE nucleotidase family. A divalent metal cation serves as cofactor.

It localises to the cytoplasm. It catalyses the reaction a ribonucleoside 5'-phosphate + H2O = a ribonucleoside + phosphate. Nucleotidase that shows phosphatase activity on nucleoside 5'-monophosphates. The polypeptide is 5'-nucleotidase SurE (Leptospira borgpetersenii serovar Hardjo-bovis (strain JB197)).